The sequence spans 184 residues: Ras-related protein Rap-1b (184 aa).

10–18 (GSGGVGKSA) is a binding site for GTP. Residues 25 to 67 (QGIFVEKYDPTIEDSYRKQVEVDAQQCMLEILDTAGTEQFTAM) are interaction with KRIT1. Residues 32 to 40 (YDPTIEDSY) carry the Effector region motif. The residue at position 39 (S39) is an ADP-ribosylserine; by botulinum toxin. Residues 57 to 61 (DTAGT), 116 to 119 (NKCD), and 147 to 149 (SAK) each bind GTP. S179 carries the phosphoserine; by PKA modification. Cysteine methyl ester is present on C181. The S-geranylgeranyl cysteine moiety is linked to residue C181. The propeptide at 182–184 (QLL) is removed in mature form.

It belongs to the small GTPase superfamily. Ras family. As to quaternary structure, heterodimer with RAP1GAP. Interacts with EPAC2. Interacts with SGSM1. Interacts with SGSM2. Interacts with SGSM3. Interacts with KRIT1. Interacts with RAP1GDS1.

The protein resides in the cell membrane. The protein localises to the cytoplasm. It is found in the cytosol. It localises to the cell junction. It catalyses the reaction GTP + H2O = GDP + phosphate + H(+). Activated by guanine nucleotide-exchange factor (GEF) EPAC2 in a cAMP-dependent manner. Its function is as follows. GTP-binding protein that possesses intrinsic GTPase activity. Contributes to the polarizing activity of KRIT1 and CDH5 in the establishment and maintenance of correct endothelial cell polarity and vascular lumen. Required for the localization of phosphorylated PRKCZ, PARD3 and TIAM1 to the cell junction. Plays a role in the establishment of basal endothelial barrier function. This chain is Ras-related protein Rap-1b (Rap1b), found in Rattus norvegicus (Rat).